Here is a 518-residue protein sequence, read N- to C-terminus: Protein nucleotidyltransferase YdiU (518 aa).

Gly-109, Gly-111, Arg-112, Lys-131, Asp-143, Gly-144, Arg-194, and Arg-201 together coordinate ATP. The active-site Proton acceptor is Asp-270. Mg(2+)-binding residues include Asn-271 and Asp-280. Asp-280 lines the ATP pocket.

This sequence belongs to the SELO family. Mg(2+) is required as a cofactor. It depends on Mn(2+) as a cofactor.

The catalysed reaction is L-seryl-[protein] + ATP = 3-O-(5'-adenylyl)-L-seryl-[protein] + diphosphate. The enzyme catalyses L-threonyl-[protein] + ATP = 3-O-(5'-adenylyl)-L-threonyl-[protein] + diphosphate. It catalyses the reaction L-tyrosyl-[protein] + ATP = O-(5'-adenylyl)-L-tyrosyl-[protein] + diphosphate. It carries out the reaction L-histidyl-[protein] + UTP = N(tele)-(5'-uridylyl)-L-histidyl-[protein] + diphosphate. The catalysed reaction is L-seryl-[protein] + UTP = O-(5'-uridylyl)-L-seryl-[protein] + diphosphate. The enzyme catalyses L-tyrosyl-[protein] + UTP = O-(5'-uridylyl)-L-tyrosyl-[protein] + diphosphate. Its function is as follows. Nucleotidyltransferase involved in the post-translational modification of proteins. It can catalyze the addition of adenosine monophosphate (AMP) or uridine monophosphate (UMP) to a protein, resulting in modifications known as AMPylation and UMPylation. The protein is Protein nucleotidyltransferase YdiU of Paraburkholderia xenovorans (strain LB400).